The primary structure comprises 106 residues: Large ribosomal subunit protein uL24 (106 aa).

It belongs to the universal ribosomal protein uL24 family. Part of the 50S ribosomal subunit.

In terms of biological role, one of two assembly initiator proteins, it binds directly to the 5'-end of the 23S rRNA, where it nucleates assembly of the 50S subunit. Functionally, one of the proteins that surrounds the polypeptide exit tunnel on the outside of the subunit. The chain is Large ribosomal subunit protein uL24 from Bordetella avium (strain 197N).